Consider the following 620-residue polypeptide: Probable serine/threonine-protein kinase RTK1 (620 aa).

5 disordered regions span residues 1 to 20 (MVKETPLHSSSSTSLSSLFR), 29 to 130 (AKIF…PVRT), 153 to 186 (KDAFHHPHPVRSTAHSNISTVSSAKSDTPSSNLS), 210 to 237 (QASTPGSVELQHNSSSGSDDTSSRKKKS), and 252 to 271 (HDNHHHHHHHNRGSTPTKPK). Residues 7-18 (LHSSSSTSLSSL) show a composition bias toward low complexity. Basic and acidic residues predominate over residues 56–76 (KNTDSDQEDQIKYNKPNDRRS). Threonine 58 bears the Phosphothreonine mark. Serine 60 carries the post-translational modification Phosphoserine. 3 stretches are compositionally biased toward polar residues: residues 95–107 (VASSTLTGISPTS), 165–186 (TAHSNISTVSSAKSDTPSSNLS), and 210–222 (QASTPGSVELQHN). At serine 216 the chain carries Phosphoserine. Over residues 254–263 (NHHHHHHHNR) the composition is skewed to basic residues. The Protein kinase domain occupies 302–575 (GIPGRKLGEG…MNDVVKDDWL (274 aa)). Residues 308 to 316 (LGEGASGSV) and lysine 330 contribute to the ATP site. Residue lysine 334 forms a Glycyl lysine isopeptide (Lys-Gly) (interchain with G-Cter in ubiquitin) linkage. Aspartate 430 (proton acceptor) is an active-site residue.

The protein belongs to the protein kinase superfamily. Ser/Thr protein kinase family. In terms of assembly, interacts with ribosome biogenesis factors ARC1, CKA2 and GUS1.

It carries out the reaction L-seryl-[protein] + ATP = O-phospho-L-seryl-[protein] + ADP + H(+). The enzyme catalyses L-threonyl-[protein] + ATP = O-phospho-L-threonyl-[protein] + ADP + H(+). In terms of biological role, probable serine/threonine-protein kinase that may be involved in ribosome biogenesis. The polypeptide is Probable serine/threonine-protein kinase RTK1 (RTK1) (Saccharomyces cerevisiae (strain ATCC 204508 / S288c) (Baker's yeast)).